A 470-amino-acid polypeptide reads, in one-letter code: Neuraminidase (470 aa).

Residues 1-14 lie on the Intravirion side of the membrane; that stretch reads MNPNQKIITIGSAS. Residues 11-32 form an involved in apical transport and lipid raft association region; the sequence is GSASLGLVILNVILHVVSIIVT. Residues 15–35 traverse the membrane as a helical segment; the sequence is LGLVILNVILHVVSIIVTVLV. Residues 32-86 are hypervariable stalk region; sequence TVLVLSNNGTGPNCNGTIIREYNETVRVERITQWYNTNIIEYIEEPSNEYYMSNT. The Virion surface portion of the chain corresponds to 36–470; that stretch reads LSNNGTGPNC…AILPFDIDKM (435 aa). N-linked (GlcNAc...) asparagine; by host glycosylation is found at asparagine 39, asparagine 46, and asparagine 54. The segment at 89-470 is head of neuraminidase; that stretch reads LCEAQGFAPF…AILPFDIDKM (382 aa). Intrachain disulfides connect cysteine 90-cysteine 417, cysteine 122-cysteine 127, cysteine 182-cysteine 229, cysteine 231-cysteine 236, cysteine 277-cysteine 290, cysteine 279-cysteine 288, cysteine 316-cysteine 335, and cysteine 421-cysteine 446. Arginine 116 contributes to the substrate binding site. Asparagine 144 is a glycosylation site (N-linked (GlcNAc...) asparagine; by host). Aspartate 149 functions as the Proton donor/acceptor in the catalytic mechanism. Arginine 150 provides a ligand contact to substrate. 275-276 contacts substrate; that stretch reads EE. Residue arginine 291 participates in substrate binding. Aspartate 292 contributes to the Ca(2+) binding site. N-linked (GlcNAc...) asparagine; by host glycosylation is present at asparagine 293. Ca(2+) is bound by residues glycine 296 and aspartate 322. A substrate-binding site is contributed by arginine 368. An N-linked (GlcNAc...) asparagine; by host glycan is attached at asparagine 398. Tyrosine 402 functions as the Nucleophile in the catalytic mechanism.

The protein belongs to the glycosyl hydrolase 34 family. In terms of assembly, homotetramer. Ca(2+) serves as cofactor. N-glycosylated.

It localises to the virion membrane. The protein resides in the host apical cell membrane. It carries out the reaction Hydrolysis of alpha-(2-&gt;3)-, alpha-(2-&gt;6)-, alpha-(2-&gt;8)- glycosidic linkages of terminal sialic acid residues in oligosaccharides, glycoproteins, glycolipids, colominic acid and synthetic substrates.. Its activity is regulated as follows. Inhibited by the neuraminidase inhibitors zanamivir (Relenza) and oseltamivir (Tamiflu). These drugs interfere with the release of progeny virus from infected cells and are effective against all influenza strains. Resistance to neuraminidase inhibitors is quite rare. Catalyzes the removal of terminal sialic acid residues from viral and cellular glycoconjugates. Cleaves off the terminal sialic acids on the glycosylated HA during virus budding to facilitate virus release. Additionally helps virus spread through the circulation by further removing sialic acids from the cell surface. These cleavages prevent self-aggregation and ensure the efficient spread of the progeny virus from cell to cell. Otherwise, infection would be limited to one round of replication. Described as a receptor-destroying enzyme because it cleaves a terminal sialic acid from the cellular receptors. May facilitate viral invasion of the upper airways by cleaving the sialic acid moieties on the mucin of the airway epithelial cells. Likely to plays a role in the budding process through its association with lipid rafts during intracellular transport. May additionally display a raft-association independent effect on budding. Plays a role in the determination of host range restriction on replication and virulence. Sialidase activity in late endosome/lysosome traffic seems to enhance virus replication. In Influenza A virus (strain A/Equine/Miami/1/1963 H3N8), this protein is Neuraminidase.